A 262-amino-acid chain; its full sequence is Putative phosphatase HI_0003 (262 aa).

The active-site Nucleophile is the D9. Mg(2+)-binding residues include D9 and N11. Residues S43–A44 and K189 each bind phosphate. D212 is a Mg(2+) binding site. A phosphate-binding site is contributed by N215.

It belongs to the HAD-like hydrolase superfamily. Cof family. Requires Mg(2+) as cofactor.

In Haemophilus influenzae (strain ATCC 51907 / DSM 11121 / KW20 / Rd), this protein is Putative phosphatase HI_0003.